The following is a 274-amino-acid chain: Mitochondrial S-adenosylmethionine carrier protein (274 aa).

Solcar repeat units follow at residues 4-77 (PGFT…VKSL), 86-168 (FKPV…LKAL), and 177-265 (VDSW…ARSL). The next 6 helical transmembrane spans lie at 5–25 (GFTASLVAGGVAGVSVDLILF), 49–69 (IYAGVPSAAVGSFPNAAAFFL), 85–105 (HFKPVKHMLAASTGEVVACLI), 142–162 (RGYKSTVLREIPFSLVQFPLW), 182–202 (SAVCGAFAGGFAAAVTTPLDV), and 238–258 (FAGVLPRMAAISMGGFIFLGA).

This sequence belongs to the mitochondrial carrier (TC 2.A.29) family.

The protein resides in the mitochondrion inner membrane. It carries out the reaction S-adenosyl-L-homocysteine(out) + S-adenosyl-L-methionine(in) = S-adenosyl-L-homocysteine(in) + S-adenosyl-L-methionine(out). Functionally, mitochondrial S-adenosyl-L-methionine/S-adenosyl-L-homocysteine antiporter. Mediates the exchange of cytosolic S-adenosyl-L-methionine, the predominant methyl-group donor for macromolecule methylation processes, for mitochondrial S-adenosylhomocysteine(SAH), a by-product of methylation reactions. The polypeptide is Mitochondrial S-adenosylmethionine carrier protein (Mus musculus (Mouse)).